Here is a 450-residue protein sequence, read N- to C-terminus: Putative zinc metalloprotease TP_0600 (450 aa).

His18 contributes to the Zn(2+) binding site. Glu19 is an active-site residue. His22 is a binding site for Zn(2+). The chain crosses the membrane as a helical span at residues 102 to 124 (IAFAGPLANVLMAVMVLALVSAL). The 79-residue stretch at 200–278 (TITPDRDAHT…SVVLTVLRSG (79 aa)) folds into the PDZ domain. The next 2 helical transmembrane spans lie at 384 to 406 (VCVS…LILF) and 421 to 443 (VLYY…AFWN).

This sequence belongs to the peptidase M50B family. Zn(2+) serves as cofactor.

It is found in the cell inner membrane. This Treponema pallidum (strain Nichols) protein is Putative zinc metalloprotease TP_0600.